A 40-amino-acid polypeptide reads, in one-letter code: Photosystem II reaction center protein J (40 aa).

The chain crosses the membrane as a helical span at residues 8 to 28; the sequence is IPLWIIGTVTGIFGIGLIGIF.

The protein belongs to the PsbJ family. PSII is composed of 1 copy each of membrane proteins PsbA, PsbB, PsbC, PsbD, PsbE, PsbF, PsbH, PsbI, PsbJ, PsbK, PsbL, PsbM, PsbT, PsbX, PsbY, PsbZ, Psb30/Ycf12, at least 3 peripheral proteins of the oxygen-evolving complex and a large number of cofactors. It forms dimeric complexes.

It localises to the plastid membrane. Its function is as follows. One of the components of the core complex of photosystem II (PSII). PSII is a light-driven water:plastoquinone oxidoreductase that uses light energy to abstract electrons from H(2)O, generating O(2) and a proton gradient subsequently used for ATP formation. It consists of a core antenna complex that captures photons, and an electron transfer chain that converts photonic excitation into a charge separation. This is Photosystem II reaction center protein J from Cuscuta reflexa (Southern Asian dodder).